The chain runs to 298 residues: uncharacterized protein (298 aa).

The signal sequence occupies residues Met1–Ala19. Residues Arg278–Lys298 are disordered. The span at Asn279–Lys298 shows a compositional bias: low complexity.

To R.prowazekii RP296.

This is an uncharacterized protein from Rickettsia prowazekii (strain Madrid E).